Here is a 553-residue protein sequence, read N- to C-terminus: Cytochrome P450 86A22 (553 aa).

The chain crosses the membrane as a helical span at residues 8-24 (MIVAIVAAYLLWFKSIT). Residue Cys-459 coordinates heme.

This sequence belongs to the cytochrome P450 family. It depends on heme as a cofactor. Mostly expressed in the developing stigma of floral buds. Weakly detected in leaves, stems and flowers.

Its subcellular location is the membrane. It catalyses the reaction (9Z)-octadecenoyl-CoA + reduced [NADPH--hemoprotein reductase] + O2 = (9Z)-18-hydroxyoctadecenoyl-CoA + oxidized [NADPH--hemoprotein reductase] + H2O + H(+). The enzyme catalyses (9Z,12Z)-octadecadienoyl-CoA + reduced [NADPH--hemoprotein reductase] + O2 = (9Z,12Z)-18-hydroxyoctadecadienoyl-CoA + oxidized [NADPH--hemoprotein reductase] + H2O + H(+). In terms of biological role, fatty acyl-CoA omega-hydroxylase essential for the production of omega-hydroxy fatty acids and the biosynthesis of triacylglycerol-/diacylglycerol-based estolide polyesters in the stigma. Substrate preference is 16:0-CoA &gt; 18:1-CoA &gt; 18:0-CoA. This Petunia hybrida (Petunia) protein is Cytochrome P450 86A22.